We begin with the raw amino-acid sequence, 877 residues long: Ewing's tumor-associated antigen 1 homolog (877 aa).

Residues 1–82 form a disordered region; sequence MQLKDGGTGM…GRSPRGKETP (82 aa). A compositionally biased stretch (basic residues) spans 56–65; the sequence is AGTRSARRAQ. K87 is covalently cross-linked (Glycyl lysine isopeptide (Lys-Gly) (interchain with G-Cter in SUMO2)). Residues 107–113 carry the ATR-activation domain (AAD) motif; sequence IFWDQNS. Coiled coils occupy residues 185-213 and 306-335; these read KTKN…IQEQ and AFLN…LLTE. Residues K416 and K444 each participate in a glycyl lysine isopeptide (Lys-Gly) (interchain with G-Cter in SUMO2) cross-link. The interval 450 to 479 is disordered; it reads PSKTRNGELRNAGEHRFSSHPGDESRKVPF. Residues 454–476 are compositionally biased toward basic and acidic residues; it reads RNGELRNAGEHRFSSHPGDESRK. The residue at position 467 (S467) is a Phosphoserine. A Glycyl lysine isopeptide (Lys-Gly) (interchain with G-Cter in SUMO2) cross-link involves residue K510. The short motif at 607-622 is the RBM1 motif element; that stretch reads GEVDDDLFCQACDDIE. Disordered regions lie at residues 626–664 and 818–877; these read QQEN…PSKH and ANQQ…ISLP. The span at 637–662 shows a compositional bias: low complexity; sequence SVSYTSTRGSRSSSTASKQASQSAPS. A compositionally biased stretch (polar residues) spans 818–833; it reads ANQQQSSINYSESLKP. A compositionally biased stretch (basic and acidic residues) spans 840–859; it reads ERNRKYSPEEIQRKRQEALV. Residues 843–865 carry the RBM2 motif motif; it reads RKYSPEEIQRKRQEALVRRKAKA. Over residues 868 to 877 the composition is skewed to polar residues; the sequence is TVQSAPISLP.

In terms of assembly, interacts (via RBM1 motif) with RPA1. Interacts (via RBM2 motif) with RPA2. Interacts (via the ATR-activation domain motif) with ATR. In terms of processing, phosphorylated by ATR.

It localises to the nucleus. In terms of biological role, replication stress response protein that accumulates at DNA damage sites and promotes replication fork progression and integrity. Recruited to stalled replication forks via interaction with the RPA complex and directly stimulates ATR kinase activity independently of TOPBP1. Probably only regulates a subset of ATR targets. The sequence is that of Ewing's tumor-associated antigen 1 homolog from Mus musculus (Mouse).